Consider the following 455-residue polypeptide: MGLSVIILAAGQGKRMASSTPKILHPLGGIPLLERVVNTARLLNPHTIHVVYGNGGSHVREKLNYLPVHWIEQSQQLGTGHAVLQAIPFCQNEDRVLILYGDVPLISPKTLNSLLENTPSNGLGVVVAELPDPTGLGRIIRDDFGNILSIVEHKDAAEHQLKIREINTGIMTTTAMNLKKWLPQLNNNNCQKEYYLTDTVALAVAEGCPVGGVAAQCCEEVQGVNDRWELTKLERYYQRLMAKKLSLAGVTIIDPERFDARGENIEIAPDVVIDVNVILEGNVQLDRNVRIGPNVILKNTTVGENTEIHANSVIEAAVIKANCSVGPFARLRPGSVLEEGAKVGNFVEMKKTTLGRGSKANHLTYLGDTIIGKNVNVGAGTITCNYDGANKWQTKIEDGAFIGSNVALVAPLTVGKNATIGAGSTLSQDAPPDQLTVARERQRTIKGWHRPTKKE.

Residues 1-227 (MGLSVIILAA…CEEVQGVNDR (227 aa)) form a pyrophosphorylase region. Residues 8-11 (LAAG), lysine 22, glutamine 73, 78-79 (GT), 100-102 (YGD), glycine 137, glutamate 152, asparagine 167, and asparagine 225 contribute to the UDP-N-acetyl-alpha-D-glucosamine site. Aspartate 102 contacts Mg(2+). Asparagine 225 contributes to the Mg(2+) binding site. The linker stretch occupies residues 228-248 (WELTKLERYYQRLMAKKLSLA). Positions 249–455 (GVTIIDPERF…KGWHRPTKKE (207 aa)) are N-acetyltransferase. 2 residues coordinate UDP-N-acetyl-alpha-D-glucosamine: arginine 332 and lysine 350. Histidine 362 (proton acceptor) is an active-site residue. Residues tyrosine 365 and asparagine 376 each coordinate UDP-N-acetyl-alpha-D-glucosamine. Acetyl-CoA is bound by residues alanine 379, 385 to 386 (NY), serine 404, alanine 422, and arginine 439.

This sequence in the N-terminal section; belongs to the N-acetylglucosamine-1-phosphate uridyltransferase family. It in the C-terminal section; belongs to the transferase hexapeptide repeat family. As to quaternary structure, homotrimer. Mg(2+) serves as cofactor.

The protein resides in the cytoplasm. It catalyses the reaction alpha-D-glucosamine 1-phosphate + acetyl-CoA = N-acetyl-alpha-D-glucosamine 1-phosphate + CoA + H(+). The enzyme catalyses N-acetyl-alpha-D-glucosamine 1-phosphate + UTP + H(+) = UDP-N-acetyl-alpha-D-glucosamine + diphosphate. Its pathway is nucleotide-sugar biosynthesis; UDP-N-acetyl-alpha-D-glucosamine biosynthesis; N-acetyl-alpha-D-glucosamine 1-phosphate from alpha-D-glucosamine 6-phosphate (route II): step 2/2. It participates in nucleotide-sugar biosynthesis; UDP-N-acetyl-alpha-D-glucosamine biosynthesis; UDP-N-acetyl-alpha-D-glucosamine from N-acetyl-alpha-D-glucosamine 1-phosphate: step 1/1. It functions in the pathway bacterial outer membrane biogenesis; LPS lipid A biosynthesis. In terms of biological role, catalyzes the last two sequential reactions in the de novo biosynthetic pathway for UDP-N-acetylglucosamine (UDP-GlcNAc). The C-terminal domain catalyzes the transfer of acetyl group from acetyl coenzyme A to glucosamine-1-phosphate (GlcN-1-P) to produce N-acetylglucosamine-1-phosphate (GlcNAc-1-P), which is converted into UDP-GlcNAc by the transfer of uridine 5-monophosphate (from uridine 5-triphosphate), a reaction catalyzed by the N-terminal domain. This Coxiella burnetii (strain CbuK_Q154) (Coxiella burnetii (strain Q154)) protein is Bifunctional protein GlmU.